The following is a 387-amino-acid chain: MSNGAFDAIFEYAWGQIDKPISGDFIYGKDLPKLIEIIENIFQKAQKSGSYELRLPLFSEINKDLFRTFSNTKTFFKIHKEEFDDIFFNLVNHPLREILENAFIGVDSIPSDFIVSMNLNSPSKFLVENKSKNTEGAGISTSRKKLTESPIKLLSRNNIGKALEVQVEELKRELTAKQSLLQENERQVSELKIRLETYQEKYASIQQRFSDLQKARQVEDNQNSSRTSDPGSPLVTGIDQKAILEEFRRRLQRQTDTISFLKDQIRRERGLNCSNDKVSHSKRKHATTDGDGTFKNFISAVPSNIWVKATIRIIVCFALLAGVLPYIRKYVYAHDTPSQNSRLQLSWWENSGILSKIVWFFEDQTDLETEYRSNANVDDAYSRVFGI.

Residues 157 to 269 (NNIGKALEVQ…FLKDQIRRER (113 aa)) are a coiled coil. The disordered stretch occupies residues 216–235 (RQVEDNQNSSRTSDPGSPLV). The segment covering 220–230 (DNQNSSRTSDP) has biased composition (polar residues). The chain crosses the membrane as a helical span at residues 311–327 (IRIIVCFALLAGVLPYI).

Belongs to the MPS2 family. As to quaternary structure, interacts with BBP1, MPS3, and SPC24.

Its subcellular location is the nucleus membrane. The protein localises to the cytoplasm. It localises to the cytoskeleton. It is found in the microtubule organizing center. The protein resides in the spindle pole body. Its function is as follows. Component of the spindle pole body (SPB) required for insertion of the nascent SPB into the nuclear envelope and for the proper execution of spindle pole body (SPB) duplication. The polypeptide is Monopolar spindle protein 2 (MPS2) (Saccharomyces cerevisiae (strain RM11-1a) (Baker's yeast)).